The following is a 404-amino-acid chain: Deoxyguanosinetriphosphate triphosphohydrolase-like protein (404 aa).

The region spanning 69-217 is the HD domain; sequence RLTHSLEVAQ…AGIADDIAYD (149 aa).

This sequence belongs to the dGTPase family. Type 2 subfamily.

This chain is Deoxyguanosinetriphosphate triphosphohydrolase-like protein, found in Rhodopseudomonas palustris (strain BisB18).